Here is a 359-residue protein sequence, read N- to C-terminus: Holliday junction branch migration complex subunit RuvB (359 aa).

A disordered region spans residues 1-22 (MAIVSSNAEPSKGAPRPKPSRV). Positions 13–204 (GAPRPKPSRV…FGLIQRLEFY (192 aa)) are large ATPase domain (RuvB-L). Positions 43, 44, 85, 88, 89, 90, 194, 204, and 241 each coordinate ATP. Residue threonine 89 coordinates Mg(2+). The segment at 205–276 (GQEDLQAIVM…LVDEALTLHR (72 aa)) is small ATPAse domain (RuvB-S). Residues 279–359 (GKGLDASDRR…GWPADEGDAA (81 aa)) are head domain (RuvB-H). DNA contacts are provided by arginine 334 and arginine 339.

Belongs to the RuvB family. In terms of assembly, homohexamer. Forms an RuvA(8)-RuvB(12)-Holliday junction (HJ) complex. HJ DNA is sandwiched between 2 RuvA tetramers; dsDNA enters through RuvA and exits via RuvB. An RuvB hexamer assembles on each DNA strand where it exits the tetramer. Each RuvB hexamer is contacted by two RuvA subunits (via domain III) on 2 adjacent RuvB subunits; this complex drives branch migration. In the full resolvosome a probable DNA-RuvA(4)-RuvB(12)-RuvC(2) complex forms which resolves the HJ.

The protein resides in the cytoplasm. It carries out the reaction ATP + H2O = ADP + phosphate + H(+). In terms of biological role, the RuvA-RuvB-RuvC complex processes Holliday junction (HJ) DNA during genetic recombination and DNA repair, while the RuvA-RuvB complex plays an important role in the rescue of blocked DNA replication forks via replication fork reversal (RFR). RuvA specifically binds to HJ cruciform DNA, conferring on it an open structure. The RuvB hexamer acts as an ATP-dependent pump, pulling dsDNA into and through the RuvAB complex. RuvB forms 2 homohexamers on either side of HJ DNA bound by 1 or 2 RuvA tetramers; 4 subunits per hexamer contact DNA at a time. Coordinated motions by a converter formed by DNA-disengaged RuvB subunits stimulates ATP hydrolysis and nucleotide exchange. Immobilization of the converter enables RuvB to convert the ATP-contained energy into a lever motion, pulling 2 nucleotides of DNA out of the RuvA tetramer per ATP hydrolyzed, thus driving DNA branch migration. The RuvB motors rotate together with the DNA substrate, which together with the progressing nucleotide cycle form the mechanistic basis for DNA recombination by continuous HJ branch migration. Branch migration allows RuvC to scan DNA until it finds its consensus sequence, where it cleaves and resolves cruciform DNA. In Synechococcus sp. (strain CC9311), this protein is Holliday junction branch migration complex subunit RuvB.